Reading from the N-terminus, the 212-residue chain is MAPTDGAAPDGVDFYDRPVLAVAPALLGATVWHGPVAVRITEVEAYGGLDDPASHAYRGPTPRAAVMFGPPGRAYVYLSYGVHWCLNVVCGPVGSASAVLLRSGEVVAGRDLVAGRFPRLVEADLARGPGRLGRALAVTGALSGTTITGPGPVTVALAGGRGIRPPGPPGISGGRVRRGPRAGIRVATEWPWRFWLAGEATVSGPRPPRRPR.

The protein belongs to the DNA glycosylase MPG family.

This Frankia casuarinae (strain DSM 45818 / CECT 9043 / HFP020203 / CcI3) protein is Putative 3-methyladenine DNA glycosylase.